The following is a 49-amino-acid chain: U-theraphotoxin-Lk2a (49 aa).

Disulfide bonds link Cys4–Cys17, Cys8–Cys41, Cys22–Cys24, and Cys35–Cys46.

Belongs to the neurotoxin 12 (Hwtx-2) family. 04 (lasiotoxin) subfamily. Expressed by the venom gland.

It is found in the secreted. In terms of biological role, toxin that causes irreversible contractile paralysis into adult Aedes aegypti resulting in 100% mortality after 24 hours. The polypeptide is U-theraphotoxin-Lk2a (Lasiodora klugi (Bahia scarlet tarantula)).